We begin with the raw amino-acid sequence, 291 residues long: tRNA U34 carboxymethyltransferase (291 aa).

Residues lysine 61, tryptophan 75, lysine 80, glycine 100, 122-124 (DPS), 149-150 (VE), tyrosine 169, and arginine 284 contribute to the carboxy-S-adenosyl-L-methionine site.

It belongs to the class I-like SAM-binding methyltransferase superfamily. CmoB family. In terms of assembly, homotetramer.

It carries out the reaction carboxy-S-adenosyl-L-methionine + 5-hydroxyuridine(34) in tRNA = 5-carboxymethoxyuridine(34) in tRNA + S-adenosyl-L-homocysteine + H(+). In terms of biological role, catalyzes carboxymethyl transfer from carboxy-S-adenosyl-L-methionine (Cx-SAM) to 5-hydroxyuridine (ho5U) to form 5-carboxymethoxyuridine (cmo5U) at position 34 in tRNAs. This Campylobacter jejuni subsp. jejuni serotype O:6 (strain 81116 / NCTC 11828) protein is tRNA U34 carboxymethyltransferase.